A 296-amino-acid chain; its full sequence is Cytidine deaminase (296 aa).

CMP/dCMP-type deaminase domains follow at residues 48–168 and 187–296; these read DVDA…FGPV and QNVN…FIEE. Position 89–91 (89–91) interacts with substrate; it reads NME. H102 serves as a coordination point for Zn(2+). The active-site Proton donor is the E104. C129 and C132 together coordinate Zn(2+).

The protein belongs to the cytidine and deoxycytidylate deaminase family. In terms of assembly, homodimer. Zn(2+) is required as a cofactor.

The enzyme catalyses cytidine + H2O + H(+) = uridine + NH4(+). It catalyses the reaction 2'-deoxycytidine + H2O + H(+) = 2'-deoxyuridine + NH4(+). Functionally, this enzyme scavenges exogenous and endogenous cytidine and 2'-deoxycytidine for UMP synthesis. The protein is Cytidine deaminase of Pectobacterium atrosepticum (strain SCRI 1043 / ATCC BAA-672) (Erwinia carotovora subsp. atroseptica).